The following is a 130-amino-acid chain: MASPKSPTRPTQQNPQPNFHDFLPTMAGNLGGEGLIGELCNGFELLMDREKGVITFESLRRNAAAVLGLGDLTDEDVRCMIKEGDFDCDGALNQMEFCVLMFRLSPDLMEASRCLVTEVIEEEFGFTRRH.

The EF-hand domain occupies 72-107; sequence LTDEDVRCMIKEGDFDCDGALNQMEFCVLMFRLSPD. Ca(2+) is bound by residues Asp-85, Asp-87, Asp-89, and Glu-96.

In terms of biological role, potential calcium sensor that binds calcium in vitro. This Arabidopsis thaliana (Mouse-ear cress) protein is Calcium-binding protein KRP1.